The sequence spans 255 residues: HLA class II histocompatibility antigen, DQ alpha 2 chain (255 aa).

A signal peptide spans 1 to 23 (MILNKALLLGALALTAVMSPCGG). Residues 24–110 (EDIVADHVAS…RQSNSTAATN (87 aa)) form an alpha-1 region. Residues 24-217 (EDIVADHVAS…IPAPMSELTE (194 aa)) are Extracellular-facing. N-linked (GlcNAc...) asparagine glycosylation is found at Asn-104 and Asn-144. The tract at residues 111-204 (EVPEVTVFSK…GLDEPLLKHW (94 aa)) is alpha-2. The Ig-like C1-type domain maps to 113-205 (PEVTVFSKFP…LDEPLLKHWE (93 aa)). An intrachain disulfide couples Cys-133 to Cys-189. Residues 205–217 (EPEIPAPMSELTE) form a connecting peptide region. Residues 218 to 240 (TLVCALGLSVGLMGIVVGTVFII) traverse the membrane as a helical segment. The Cytoplasmic portion of the chain corresponds to 241–255 (QGLRSVGASRHQGLL).

It belongs to the MHC class II family. In terms of assembly, heterodimer of an alpha and a beta subunit; also referred as MHC class II molecule. Dimer formation with HLA-DQB2, but not with HLA-DQB1, is required for efficient exit from the endoplasmic reticulum (ER). In the ER, forms a heterononamer; 3 MHC class II molecules bind to a CD74 homotrimer (also known as invariant chain or HLA class II histocompatibility antigen gamma chain). In the endosomal/lysosomal system; CD74 undergoes sequential degradation by various proteases; leaving a small fragment termed CLIP on each MHC class II molecule. MHC class II molecule interacts with HLA_DM, and HLA_DO in B-cells, in order to release CLIP and facilitate the binding of antigenic peptides. Association with HLA-DMA also occurs in skin Langerhans cells, in post-Golgi compartments. In terms of tissue distribution, restricted to skin Langerhans cells, although some expression at low levels may occur at the surface of B lymphoblastoid cells.

The protein resides in the cell membrane. It is found in the endoplasmic reticulum membrane. The protein localises to the golgi apparatus. It localises to the trans-Golgi network membrane. Its subcellular location is the endosome membrane. The protein resides in the lysosome membrane. In terms of biological role, binds peptides derived from antigens that access the endocytic route of antigen presenting cells (APC) and presents them on the cell surface for recognition by the CD4 T-cells. The peptide binding cleft accommodates peptides of 10-30 residues. The peptides presented by MHC class II molecules are generated mostly by degradation of proteins that access the endocytic route, where they are processed by lysosomal proteases and other hydrolases. Exogenous antigens that have been endocytosed by the APC are thus readily available for presentation via MHC II molecules, and for this reason this antigen presentation pathway is usually referred to as exogenous. As membrane proteins on their way to degradation in lysosomes as part of their normal turn-over are also contained in the endosomal/lysosomal compartments, exogenous antigens must compete with those derived from endogenous components. Autophagy is also a source of endogenous peptides, autophagosomes constitutively fuse with MHC class II loading compartments. In addition to APCs, other cells of the gastrointestinal tract, such as epithelial cells, express MHC class II molecules and CD74 and act as APCs, which is an unusual trait of the GI tract. To produce a MHC class II molecule that presents an antigen, three MHC class II molecules (heterodimers of an alpha and a beta chain) associate with a CD74 trimer in the ER to form a heterononamer. Soon after the entry of this complex into the endosomal/lysosomal system where antigen processing occurs, CD74 undergoes a sequential degradation by various proteases, including CTSS and CTSL, leaving a small fragment termed CLIP (class-II-associated invariant chain peptide). The removal of CLIP is facilitated by HLA-DM via direct binding to the alpha-beta-CLIP complex so that CLIP is released. HLA-DM stabilizes MHC class II molecules until primary high affinity antigenic peptides are bound. The MHC II molecule bound to a peptide is then transported to the cell membrane surface. In B-cells, the interaction between HLA-DM and MHC class II molecules is regulated by HLA-DO. Primary dendritic cells (DCs) also to express HLA-DO. Lysosomal microenvironment has been implicated in the regulation of antigen loading into MHC II molecules, increased acidification produces increased proteolysis and efficient peptide loading. In Homo sapiens (Human), this protein is HLA class II histocompatibility antigen, DQ alpha 2 chain (HLA-DQA2).